A 749-amino-acid polypeptide reads, in one-letter code: Phosphate-regulating neutral endopeptidase PHEX (749 aa).

Residues 1–20 (MEAETGSSVETGKKANRGTR) are Cytoplasmic-facing. The chain crosses the membrane as a helical; Signal-anchor for type II membrane protein span at residues 21-41 (IALVVFVGGTLVLGTILFLVS). Residues 42–641 (QGLLSLQAKQ…LNVKGKRTLG (600 aa)) are Extracellular-facing. The region spanning 53 to 749 (YCLKPECIEA…NRGMDSCRLW (697 aa)) is the Peptidase M13 domain. An intrachain disulfide couples Cys-54 to Cys-59. 7 N-linked (GlcNAc...) asparagine glycosylation sites follow: Asn-71, Asn-238, Asn-263, Asn-290, Asn-301, Asn-377, and Asn-484. 4 disulfides stabilise this stretch: Cys-77/Cys-733, Cys-85/Cys-693, Cys-142/Cys-406, and Cys-617/Cys-746. His-580 is a Zn(2+) binding site. Residue Glu-581 is part of the active site. Zn(2+)-binding residues include His-584 and Glu-642. Residue Asp-646 is the Proton donor of the active site. The N-linked (GlcNAc...) asparagine glycan is linked to Asn-736.

This sequence belongs to the peptidase M13 family. As to quaternary structure, interacts with MEPE; the interaction is zinc-dependent (via ASARM motif). Zn(2+) is required as a cofactor. As to expression, specifically expressed in ovary. Expressed at low levels in kidney.

The protein resides in the cell membrane. In terms of biological role, peptidase that cleaves SIBLING (small integrin-binding ligand, N-linked glycoprotein)-derived ASARM peptides, thus regulating their biological activity. Cleaves ASARM peptides between Ser and Glu or Asp residues. Regulates osteogenic cell differentiation and bone mineralization through the cleavage of the MEPE-derived ASARM peptide. Promotes dentin mineralization and renal phosphate reabsorption by cleaving DMP1- and MEPE-derived ASARM peptides. Inhibits the cleavage of MEPE by CTSB/cathepsin B thus preventing MEPE degradation. The chain is Phosphate-regulating neutral endopeptidase PHEX (PHEX) from Homo sapiens (Human).